The primary structure comprises 238 residues: Probable transcriptional regulatory protein SZO_02930 (238 aa).

This sequence belongs to the TACO1 family. YeeN subfamily.

It localises to the cytoplasm. The polypeptide is Probable transcriptional regulatory protein SZO_02930 (Streptococcus equi subsp. zooepidemicus (strain H70)).